The primary structure comprises 224 residues: Claudin-19 (224 aa).

At 1–7 (MANSGLQ) the chain is on the cytoplasmic side. Residues 8–28 (LLGYFLALGGWVGIIASTALP) form a helical membrane-spanning segment. Topologically, residues 29-81 (QWKQSSYAGDAIITAVGLYEGLWMSCASQSTGQVQCKLYDSLLALDGHIQSAR) are extracellular. The cysteines at positions 54 and 64 are disulfide-linked. Residues 82–102 (ALMVVAVLLGFVAMVLSVVGM) traverse the membrane as a helical segment. The Cytoplasmic segment spans residues 103–117 (KCTRVGDSNPTAKSR). A helical transmembrane segment spans residues 118 to 138 (VAISGGALFLLAGLCTLTAVS). The Extracellular portion of the chain corresponds to 139–160 (WYATLVTQEFFNPSTPVNARYE). Residues 161-181 (FGPALFVGWASAGLAMLGGSF) form a helical membrane-spanning segment. Over 182–224 (LCCTCPEPERANSIPQPYRSGPSTAAREPVVKLPASVKGPLGV) the chain is Cytoplasmic.

The protein belongs to the claudin family. Can form homo- and heteropolymeric tight junction strands. Interacts with other claudins including CLDN3, CLDN10, CLDN16 and CLDN18 with highest affinity for CLDN16. Interacts (via PDZ-binding motif TRV) with TJP1 (via PDZ domain). As to quaternary structure, (Microbial infection) Interacts (via both extracellular domains) with Clostridium perfringens enterotoxin CPE; the interaction disrupts claudin assembly in tight junctions. In terms of tissue distribution, expressed in the corticomedullary axis of the TAL, specifically in the cortex and the outer stripe of outer medulla (OSOM) zone (at protein level). Expressed in peripheral nervous system, in Schwan cells (at protein level).

It localises to the cell junction. The protein localises to the tight junction. The protein resides in the cell membrane. The enzyme catalyses Mg(2+)(in) = Mg(2+)(out). It catalyses the reaction Ca(2+)(in) = Ca(2+)(out). It carries out the reaction Na(+)(in) = Na(+)(out). The catalysed reaction is K(+)(in) = K(+)(out). The enzyme catalyses Rb(+)(in) = Rb(+)(out). It catalyses the reaction Cs(+)(in) = Cs(+)(out). It carries out the reaction Li(+)(in) = Li(+)(out). Forms paracellular channels: coassembles with CLDN16 into tight junction strands with cation-selective channels through the strands, conveying epithelial permeability in a process known as paracellular tight junction permeability. Involved in the maintenance of ion gradients along the nephron. In the thick ascending limb (TAL) of Henle's loop, facilitates sodium paracellular permeability from the interstitial compartment to the lumen, contributing to the lumen-positive transepithelial potential that drives paracellular magnesium and calcium reabsorption. Forms paracellular barriers on its own. In the peripheral nervous system, represents a major constituent of the tight junctions in Schwann cells and contributes to electrical sealing. During retinal neurogenesis, may regulate the barrier properties of tight junctions in retinal pigment epithelium, required for proper retinal tissue differentiation and vision. The chain is Claudin-19 from Mus musculus (Mouse).